Reading from the N-terminus, the 53-residue chain is Rubredoxin 3 (53 aa).

Residues 1-53 form the Rubredoxin-like domain; it reads MQKWVCVPCGYEYDPADGDPENGIEPGTAFEDLPEDWVCPVCGVDKSFFEPVS. Fe cation is bound by residues Cys-6, Cys-9, Cys-39, and Cys-42.

The protein belongs to the rubredoxin family. Monomer. Requires Fe(3+) as cofactor.

Functions as an electron acceptor for pyruvate ferredoxin oxidoreductase (PFOR). This Chlorobaculum tepidum (strain ATCC 49652 / DSM 12025 / NBRC 103806 / TLS) (Chlorobium tepidum) protein is Rubredoxin 3 (rub3).